The primary structure comprises 81 residues: Photosystem I iron-sulfur center (81 aa).

2 consecutive 4Fe-4S ferredoxin-type domains span residues 2–31 (AHSVKIYDTCIGCTQCVRACPTDVLEMIPW) and 39–68 (IASAPRTEDCAGCKRCESACPTDFLSVRVY). 8 residues coordinate [4Fe-4S] cluster: Cys11, Cys14, Cys17, Cys21, Cys48, Cys51, Cys54, and Cys58.

In terms of assembly, the eukaryotic PSI reaction center is composed of at least 11 subunits. [4Fe-4S] cluster is required as a cofactor.

The protein resides in the plastid. Its subcellular location is the chloroplast thylakoid membrane. The enzyme catalyses reduced [plastocyanin] + hnu + oxidized [2Fe-2S]-[ferredoxin] = oxidized [plastocyanin] + reduced [2Fe-2S]-[ferredoxin]. Functionally, apoprotein for the two 4Fe-4S centers FA and FB of photosystem I (PSI); essential for photochemical activity. FB is the terminal electron acceptor of PSI, donating electrons to ferredoxin. The C-terminus interacts with PsaA/B/D and helps assemble the protein into the PSI complex. Required for binding of PsaD and PsaE to PSI. PSI is a plastocyanin-ferredoxin oxidoreductase, converting photonic excitation into a charge separation, which transfers an electron from the donor P700 chlorophyll pair to the spectroscopically characterized acceptors A0, A1, FX, FA and FB in turn. This Pinus thunbergii (Japanese black pine) protein is Photosystem I iron-sulfur center.